The chain runs to 502 residues: Intracellular exo-alpha-(1-&gt;5)-L-arabinofuranosidase (502 aa).

Residues Glu-29, Asn-74, and Asn-174 each contribute to the alpha-L-arabinofuranose site. The active-site Proton donor/acceptor is the Glu-175. Residues Tyr-246, Glu-294, and Gln-351 each coordinate alpha-L-arabinofuranose. Residue Glu-294 is the Nucleophile of the active site.

Belongs to the glycosyl hydrolase 51 family. As to quaternary structure, homohexamer; trimer of dimers.

Its subcellular location is the cytoplasm. The catalysed reaction is Hydrolysis of terminal non-reducing alpha-L-arabinofuranoside residues in alpha-L-arabinosides.. The protein operates within glycan metabolism; L-arabinan degradation. Its activity is regulated as follows. Strongly inhibited by Hg(2+). Functionally, involved in the degradation of arabinan and is a key enzyme in the complete degradation of the plant cell wall. Catalyzes the cleavage of terminal alpha-(1-&gt;5)-arabinofuranosyl bonds in different hemicellulosic homopolysaccharides (branched and debranched arabinans). It acts preferentially on aryl-alpha-L-arabinofuranosides, and is much less effective on aryl-beta-D-xylopyranosides. The sequence is that of Intracellular exo-alpha-(1-&gt;5)-L-arabinofuranosidase (abfA) from Geobacillus stearothermophilus (Bacillus stearothermophilus).